The primary structure comprises 612 residues: Chaperone protein DnaK (612 aa).

A Phosphothreonine; by autocatalysis modification is found at threonine 173. A disordered region spans residues 576–612 (AAKAQQAEGGANAEGKKADDNVVDAEYEEVKDDETKK). The segment covering 578–588 (KAQQAEGGANA) has biased composition (low complexity). Positions 596 to 612 (NVVDAEYEEVKDDETKK) are enriched in acidic residues.

It belongs to the heat shock protein 70 family.

Its function is as follows. Acts as a chaperone. The sequence is that of Chaperone protein DnaK from Bacillus velezensis (strain DSM 23117 / BGSC 10A6 / LMG 26770 / FZB42) (Bacillus amyloliquefaciens subsp. plantarum).